Reading from the N-terminus, the 114-residue chain is PDZK1-interacting protein 1 (114 aa).

Over 1–28 (MSVLSLVVLSLLMALPPASCQQGRGNLQ) the chain is Extracellular. Residues 29–51 (PWMQGLIAVAVFLVLVAIAFAVN) traverse the membrane as a helical segment. Residues 52–114 (HFWCQEKPAP…EEGKVCSTPM (63 aa)) are Cytoplasmic-facing. A Phosphoserine modification is found at serine 85.

It belongs to the PDZK1-interacting protein 1/SMIM24 family. As to quaternary structure, forms a heterodimer (via N-terminal transmembrane helix) with SLC5A2/SGLT2 (via TM13); this interaction enhances SLC5A2 transporter activity. Interacts with PDZK1.

It localises to the apical cell membrane. Functionally, auxiliary protein of electrogenic Na(+)-coupled sugar symporter SLC5A2/SGLT2 and SLC5A1/SGLT1. Essential for the transporter activity of SLC5A2/SGLT2 but not SLC5A1/SGLT1. This is PDZK1-interacting protein 1 from Bos taurus (Bovine).